A 195-amino-acid chain; its full sequence is Nucleoid occlusion factor SlmA (195 aa).

One can recognise an HTH tetR-type domain in the interval 7 to 67 (TNRRAQILQA…GLIEFIEETL (61 aa)). The H-T-H motif DNA-binding region spans 30–49 (TTAKLAEKVGVSEAALYRHF). A coiled-coil region spans residues 109–141 (DALMGEQDRLRARIAKLFERLETQLKQVLRERK).

It belongs to the nucleoid occlusion factor SlmA family. Homodimer. Interacts with FtsZ.

It localises to the cytoplasm. The protein resides in the nucleoid. Required for nucleoid occlusion (NO) phenomenon, which prevents Z-ring formation and cell division over the nucleoid. Acts as a DNA-associated cell division inhibitor that binds simultaneously chromosomal DNA and FtsZ, and disrupts the assembly of FtsZ polymers. SlmA-DNA-binding sequences (SBS) are dispersed on non-Ter regions of the chromosome, preventing FtsZ polymerization at these regions. The polypeptide is Nucleoid occlusion factor SlmA (Alteromonas mediterranea (strain DSM 17117 / CIP 110805 / LMG 28347 / Deep ecotype)).